A 138-amino-acid chain; its full sequence is Centromere protein S (138 aa).

Methionine 1 is subject to N-acetylmethionine. The segment at 112–138 (AKKKKKLEDENRNSVESAEAGVEESEN) is disordered.

Belongs to the TAF9 family. CENP-S/MHF1 subfamily. As to quaternary structure, heterodimer with CENPX, sometimes called MHF; this interaction stabilizes both partners. MHF heterodimers can assemble to form tetrameric structures. MHF also coassemble with CENPT-CENPW heterodimers at centromeres to form the tetrameric CENP-T-W-S-X complex. Forms a discrete complex with FANCM and CENPX, called FANCM-MHF; this interaction, probably mediated by direct binding between CENPS and FANCM, leads to synergistic activation of double-stranded DNA binding and strongly stimulates FANCM-mediated DNA remodeling. Recruited by FANCM to the Fanconi anemia (FA) core complex, which consists of CENPS, CENPX, FANCA, FANCB, FANCC, FANCE, FANCF, FANCG, FANCL, FANCM, FAAP24 and FAAP100. The FA core complex associates with Bloom syndrome (BLM) complex, which consists of at least BLM, DNA topoisomerase 3-alpha (TOP3A), RMI1/BLAP75, RPA1/RPA70 and RPA2/RPA32. The super complex between FA and BLM is called BRAFT. Component of the CENPA-CAD complex, composed of CENPI, CENPK, CENPL, CENPO, CENPP, CENPQ, CENPR and CENPS. The CENPA-CAD complex is probably recruited on centromeres by the CENPA-NAC complex, at least composed of CENPA, CENPC, CENPH, CENPM, CENPN, CENPT and CENPU.

It localises to the nucleus. The protein localises to the chromosome. It is found in the centromere. Its subcellular location is the kinetochore. Its function is as follows. DNA-binding component of the Fanconi anemia (FA) core complex. Required for the normal activation of the FA pathway, leading to monoubiquitination of the FANCI-FANCD2 complex in response to DNA damage, cellular resistance to DNA cross-linking drugs, and prevention of chromosomal breakage. In complex with CENPX (MHF heterodimer), crucial cofactor for FANCM in both binding and ATP-dependent remodeling of DNA. Stabilizes FANCM. In complex with CENPX and FANCM (but not other FANC proteins), rapidly recruited to blocked forks and promotes gene conversion at blocked replication forks. In complex with CENPT, CENPW and CENPX (CENP-T-W-S-X heterotetramer), involved in the formation of a functional kinetochore outer plate, which is essential for kinetochore-microtubule attachment and faithful mitotic progression. As a component of MHF and CENP-T-W-S-X complexes, binds DNA and bends it to form a nucleosome-like structure. DNA-binding function is fulfilled in the presence of CENPX, with the following preference for DNA substates: Holliday junction &gt; double-stranded &gt; splay arm &gt; single-stranded. Does not bind DNA on its own. In Bos taurus (Bovine), this protein is Centromere protein S (CENPS).